The primary structure comprises 853 residues: Auxin response factor 23 (853 aa).

The tract at residues 118–141 (PESKQQEDNGSTEEEVPSAPAAGH) is disordered. The segment at residues 149-251 (FCKTLTASDT…ELRVGVRRAM (103 aa)) is a DNA-binding region (TF-B3). Disordered regions lie at residues 422-484 (ESEP…RMQM) and 647-723 (PAKS…QGVS). The segment covering 425 to 455 (PNGTQRTFQTQENATPKSGFGNSSELESAQK) has biased composition (polar residues). The span at 672–686 (EWRRPDVTEVEKCSD) shows a compositional bias: basic and acidic residues. Positions 706 to 723 (PSSQQASRNMSCKSQGVS) are enriched in polar residues. In terms of domain architecture, PB1 spans 725 to 809 (RSCKKVHKQG…HKIFIYTREE (85 aa)). Positions 815–853 (PGTLNSRSEDSHANSMERGSVGREMRGCLSTSSLNSENC) are disordered. Residues 843–853 (LSTSSLNSENC) are compositionally biased toward polar residues.

The protein belongs to the ARF family. As to quaternary structure, homodimers and heterodimers. Interacts with CRL1. As to expression, expressed in roots, culms, leaves and young panicles.

It localises to the nucleus. Auxin response factors (ARFs) are transcriptional factors that bind specifically to the DNA sequence 5'-TGTCTC-3' found in the auxin-responsive promoter elements (AuxREs). The sequence is that of Auxin response factor 23 (ARF23) from Oryza sativa subsp. japonica (Rice).